Consider the following 473-residue polypeptide: 6-phospho-beta-glucosidase (473 aa).

E174 functions as the Proton donor in the catalytic mechanism. Catalysis depends on E366, which acts as the Nucleophile.

This sequence belongs to the glycosyl hydrolase 1 family.

It carries out the reaction 6-phospho-beta-D-glucosyl-(1-&gt;4)-D-glucose + H2O = D-glucose 6-phosphate + D-glucose. The protein is 6-phospho-beta-glucosidase (abgA) of Clostridium longisporum.